The following is a 342-amino-acid chain: AA9 family lytic polysaccharide monooxygenase H (342 aa).

Residues 1–19 (MSKASALLAGLTGAALVAA) form the signal peptide. The Cu(2+) site is built by His-20 and His-106. 2 disulfide bridges follow: Cys-75/Cys-195 and Cys-117/Cys-121. O2-binding residues include His-181 and Gln-190. Tyr-192 contacts Cu(2+). The disordered stretch occupies residues 263–308 (ATVPGGGGANPTATTTAATSAAPSTTLRTTTTSAAQTTAPPSGDVQ). Low complexity predominate over residues 272-305 (NPTATTTAATSAAPSTTLRTTTTSAAQTTAPPSG). Residues 306–342 (DVQTKYGQCGGNGWTGPTVCAPGSSCSVLNEWYSQCL) form the CBM1 domain.

It belongs to the polysaccharide monooxygenase AA9 family. Requires Cu(2+) as cofactor.

It localises to the secreted. It catalyses the reaction [(1-&gt;4)-beta-D-glucosyl]n+m + reduced acceptor + O2 = 4-dehydro-beta-D-glucosyl-[(1-&gt;4)-beta-D-glucosyl]n-1 + [(1-&gt;4)-beta-D-glucosyl]m + acceptor + H2O.. With respect to regulation, the presence of lignin presents a significant source of antioxidants, which probably increase the activity by trapping liberated oxidized fragments. Lytic polysaccharide monooxygenase (LPMO) that depolymerizes crystalline and amorphous polysaccharides via the oxidation of scissile alpha- or beta-(1-4)-glycosidic bonds, yielding C1 or C4 oxidation products. Catalysis by LPMOs requires the reduction of the active-site copper from Cu(II) to Cu(I) by a reducing agent and H(2)O(2) or O(2) as a cosubstrate. Hydrolyzes weakly barley beta-glucan, carboxymethyl cellulose, lichenan, wheat arabinoxylan and birchwood xylan. Stimulates the hydrolysis of lignocellulosic substrates (such as hydrothermal pretreated wheat straw or steam-pretreated spruce), when combined with other cellulolytic enzymes. The protein is AA9 family lytic polysaccharide monooxygenase H of Thermothelomyces thermophilus (strain ATCC 42464 / BCRC 31852 / DSM 1799) (Sporotrichum thermophile).